A 142-amino-acid chain; its full sequence is Midkine (142 aa).

Positions 1-21 are cleaved as a signal peptide; it reads MELRAFCVILLITFLAVSSQA. 5 disulfides stabilise this stretch: Cys36–Cys60, Cys44–Cys69, Cys51–Cys73, Cys83–Cys115, and Cys93–Cys125.

Belongs to the pleiotrophin family.

It localises to the secreted. Its function is as follows. Secreted protein that functions as a cytokine and growth factor and mediates its signal through cell-surface proteoglycan and non-proteoglycan receptors. Binds cell-surface proteoglycan receptors via their chondroitin sulfate (CS) groups. Thereby regulates many processes like inflammatory response, cell proliferation, cell adhesion, cell growth, cell survival, tissue regeneration, cell differentiation and cell migration. Inhibits mesoderm formation and promotes neural formation during development. Plays a role in development of the neuromuscular junction (NMJ). Has antibacterial activity against both Gram-positive and Gram-negative bacteria. This Xenopus tropicalis (Western clawed frog) protein is Midkine.